Here is a 113-residue protein sequence, read N- to C-terminus: MTLFIAGVTLEEVREATVSALFVKLEQEKKALYLGAGSEDSLNLCKSTLDKVQEDYPLDDMEKDYLRDLLQFWLSRLFLGDGFEGEIPDSSEDLRRTATTAFTYTAAIRHYCM.

In Bacillus phage SP01 (Bacteriophage SP01), this protein is Putative gene 57 protein (57).